A 232-amino-acid polypeptide reads, in one-letter code: Large ribosomal subunit protein uL1 (232 aa).

This sequence belongs to the universal ribosomal protein uL1 family. As to quaternary structure, part of the 50S ribosomal subunit.

Binds directly to 23S rRNA. The L1 stalk is quite mobile in the ribosome, and is involved in E site tRNA release. Functionally, protein L1 is also a translational repressor protein, it controls the translation of the L11 operon by binding to its mRNA. This Chelativorans sp. (strain BNC1) protein is Large ribosomal subunit protein uL1.